The primary structure comprises 347 residues: Protein RecA (347 aa).

Glycine 67–threonine 74 contributes to the ATP binding site.

It belongs to the RecA family. The protein migrates as a 40 kDa protein in strains 69A and NCTC 11637. When overexpressed in E.coli a 38 kDa protein is made which is unable to complement the E.coli deletion mutant. It has been suggested this size difference is due to a post-translational modification.

The protein resides in the cytoplasm. In terms of biological role, can catalyze the hydrolysis of ATP in the presence of single-stranded DNA, the ATP-dependent uptake of single-stranded DNA by duplex DNA, and the ATP-dependent hybridization of homologous single-stranded DNAs. It interacts with LexA causing its activation and leading to its autocatalytic cleavage. Its function is as follows. Deletion of this gene leads to the inability of the bacteria to perform homologous recombination, and markedly increases UV sensitivity. In Helicobacter pylori (strain ATCC 700392 / 26695) (Campylobacter pylori), this protein is Protein RecA.